We begin with the raw amino-acid sequence, 422 residues long: G-protein coupled receptor 83 (422 aa).

The N-terminal stretch at 1-17 (MNVPPVLLLFLLSSVRA) is a signal peptide. The Extracellular portion of the chain corresponds to 18–70 (TEQPQVVTEHPSMDAALTGANASHFWANYTFSDWQNFVGRRRYGAESQNPTVK). Residues 71-91 (ALLIVAYSFIIVFSLFGNVLV) traverse the membrane as a helical segment. Topologically, residues 92–106 (CHVIFKNQRMHSATS) are cytoplasmic. The chain crosses the membrane as a helical span at residues 107-127 (LFIVNLAVADIMITLLNTPFT). Residues 128 to 143 (LVRFVNSTWVFGKGMC) lie on the Extracellular side of the membrane. A disulfide bridge links C143 with C223. The helical transmembrane segment at 144–166 (HVSRFAQYCSLHVSALTLTAIAV) threads the bilayer. Residues 167–184 (DRHQVIMHPLKPRISITK) lie on the Cytoplasmic side of the membrane. Residues 185–205 (GVIYIAVIWVMATFFSLPHAI) traverse the membrane as a helical segment. The Extracellular portion of the chain corresponds to 206-236 (CQKLFTFKYSEDIVRSLCLPDFPEPADLFWK). The chain crosses the membrane as a helical span at residues 237–257 (YLDLATFILLYLLPLFIISVA). Residues 258 to 292 (YARVAKKLWLCNTIGDVTTEQYLALRRKKKTTVKM) lie on the Cytoplasmic side of the membrane. Residues 293–313 (LVLVVVLFALCWFPLNCYVLL) traverse the membrane as a helical segment. Residues 314 to 326 (LSSKAIHTNNALY) are Extracellular-facing. The chain crosses the membrane as a helical span at residues 327 to 347 (FAFHWFAMSSTCYNPFIYCWL). The Cytoplasmic portion of the chain corresponds to 348–422 (NENFRVELKA…SSVEPTVAVS (75 aa)). The segment at 401-422 (PSSQIQSGKTDLSSVEPTVAVS) is disordered.

The protein belongs to the G-protein coupled receptor 1 family. As to expression, expressed preferentially in brain, and its neuronal expression is relegated to limbic brain regions, particularly in forebrain.

Its subcellular location is the cell membrane. Functionally, G-protein coupled receptor for PEN, a neuropeptide produced from the precursor protein, proSAAS (encoded by PCSK1N). Acts through a G(i)- and G(q)-alpha-alpha-mediated pathway in response to PEN. Plays a role in food intake and body weight regulation. May contribute to the regulation of anxiety-related behaviors. In Rattus norvegicus (Rat), this protein is G-protein coupled receptor 83.